The sequence spans 720 residues: Pollen receptor-like kinase 1 (720 aa).

Residues 40-64 (LCSRGHLLIIFLLLVSPFNDAAVDV) form an LRR 1; degenerate repeat. Residues 123–146 (LGVLCYEGDVWGLQLENLDLSGVI) form an LRR 2; degenerate repeat. LRR repeat units follow at residues 154-179 (LHFL…SLEP), 226-248 (LPQV…HFPP), and 249-273 (NVLK…SLMD). Residues 288–319 (LESACNSPSQEANNPDSRNSSTISGQSSTDVI) are disordered. Residues 291-317 (ACNSPSQEANNPDSRNSSTISGQSSTD) show a composition bias toward polar residues. The helical transmembrane segment at 330 to 350 (MLIVAVCLVVLCLLIVLILII) threads the bilayer. 2 stretches are compositionally biased toward polar residues: residues 356 to 382 (SSSQ…TSSA) and 389 to 405 (LSGN…NSNK). The disordered stretch occupies residues 356-409 (SSSQNPQPVESNYSNNDRDQNAFTSSAPDDHVTLSGNSTYSNNQHSNSNKAEAP). In terms of domain architecture, Protein kinase spans 434–702 (RASAEVLGSG…KEVVQSIQSL (269 aa)). Residues 440–448 (LGSGNLGSS) and Lys-462 each bind ATP.

This sequence belongs to the protein kinase superfamily. In terms of assembly, interacts with KIP1. Autophosphorylated. In terms of tissue distribution, expressed in mature pollen grains and pollen tubes, but not in style, petal, leaf, root or sepal. Very low expression in the ovary.

It is found in the microsome membrane. The protein resides in the cytoplasm. The catalysed reaction is L-seryl-[protein] + ATP = O-phospho-L-seryl-[protein] + ADP + H(+). The enzyme catalyses L-threonyl-[protein] + ATP = O-phospho-L-threonyl-[protein] + ADP + H(+). It catalyses the reaction L-tyrosyl-[protein] + ATP = O-phospho-L-tyrosyl-[protein] + ADP + H(+). Dual-specificity kinase with both serine/threonine and tyrosine kinase activities. Required for postmeiotic development of microspores. Involved in embryo sac development at the late stages of megagametogenesis. Involved in the phosphorylation of KIP1. This Petunia integrifolia (Violet-flowered petunia) protein is Pollen receptor-like kinase 1.